A 122-amino-acid polypeptide reads, in one-letter code: Holo-[acyl-carrier-protein] synthase (122 aa).

Residues Asp-8 and Glu-57 each contribute to the Mg(2+) site.

It belongs to the P-Pant transferase superfamily. AcpS family. It depends on Mg(2+) as a cofactor.

Its subcellular location is the cytoplasm. The enzyme catalyses apo-[ACP] + CoA = holo-[ACP] + adenosine 3',5'-bisphosphate + H(+). Its function is as follows. Transfers the 4'-phosphopantetheine moiety from coenzyme A to a Ser of acyl-carrier-protein. This is Holo-[acyl-carrier-protein] synthase from Protochlamydia amoebophila (strain UWE25).